Consider the following 337-residue polypeptide: Large ribosomal subunit protein uL3 (337 aa).

A disordered region spans residues 1–26; sequence MGHAHAPRRGSLGYSPRVRARSQKPK.

This sequence belongs to the universal ribosomal protein uL3 family. Part of the 50S ribosomal subunit. Forms a cluster with proteins L14 and L24e.

In terms of biological role, one of the primary rRNA binding proteins, it binds directly near the 3'-end of the 23S rRNA, where it nucleates assembly of the 50S subunit. The chain is Large ribosomal subunit protein uL3 from Methanocella arvoryzae (strain DSM 22066 / NBRC 105507 / MRE50).